The chain runs to 245 residues: U11/U12 small nuclear ribonucleoprotein 35 kDa protein (245 aa).

An RRM domain is found at 51–129; that stretch reads LTLFVARLNL…HEIFVDYELE (79 aa). Residues 146–162 show a composition bias toward basic and acidic residues; sequence GKKESGQLRFGGRDRPF. A disordered region spans residues 146 to 165; sequence GKKESGQLRFGGRDRPFRKP. Lys-172 participates in a covalent cross-link: Glycyl lysine isopeptide (Lys-Gly) (interchain with G-Cter in SUMO2). Residues 173–222 form a disordered region; that stretch reads NDQFREGKRERRERSRSRERHWDSRMRDHHDRGREKRWQEREPARAWPEG. 2 stretches are compositionally biased toward basic and acidic residues: residues 174–185 and 192–216; these read DQFREGKRERRE and RHWDSRMRDHHDRGREKRWQEREPA.

Component of the U11/U12 snRNPs that are part of the U12-type spliceosome.

Its subcellular location is the nucleus. The protein is U11/U12 small nuclear ribonucleoprotein 35 kDa protein (SNRNP35) of Bos taurus (Bovine).